Consider the following 751-residue polypeptide: Oxysterol-binding protein-related protein 11 (751 aa).

Met1 carries the N-acetylmethionine modification. The segment at 1 to 57 is disordered; it reads MQGGEPASVMKVSESEGKLEGLATAVTPNKNSGNSSCGGAISSSSSNSSRGGSAKGW. Ser15 bears the Phosphoserine mark. Thr27 is subject to Phosphothreonine. Residues 31-52 show a composition bias toward low complexity; the sequence is NSGNSSCGGAISSSSSNSSRGG. The PH domain occupies 63–160; sequence MESVNGYLMK…WVSRLQICTQ (98 aa). Phosphoserine occurs at positions 177, 179, 182, 186, 189, and 194. Disordered stretches follow at residues 475-497 and 694-716; these read SGVSSSSSTPAITDHAPLPEEAP and EIDKATEHKRSLEERQRTEERLR.

Belongs to the OSBP family. As to quaternary structure, heterodimer with OSBPL9.

The protein localises to the late endosome membrane. The protein resides in the golgi apparatus. Its subcellular location is the trans-Golgi network membrane. It catalyses the reaction a 1,2-diacyl-sn-glycero-3-phospho-(1D-myo-inositol 4-phosphate)(out) + a 1,2-diacyl-sn-glycero-3-phospho-L-serine(in) = a 1,2-diacyl-sn-glycero-3-phospho-(1D-myo-inositol 4-phosphate)(in) + a 1,2-diacyl-sn-glycero-3-phospho-L-serine(out). Plays a role in regulating ADIPOQ and FABP4 levels in differentiating adipocytes and is also involved in regulation of adipocyte triglyceride storage. Weakly binds 25-hydroxycholesterol. Interacts with OSBPL9 to function as lipid transfer proteins. Together they form a heterodimer that localizes at the ER-trans-Golgi membrane contact sites, and exchanges phosphatidylserine (1,2-diacyl-sn-glycero-3-phospho-L-serine, PS) for phosphatidylinositol-4-phosphate (1,2-diacyl-sn-glycero-3-phospho-(1D-myo-inositol 4-phosphate), PI(4)P) between the two organelles, a step that is critical for sphingomyelin synthesis in the Golgi complex. This is Oxysterol-binding protein-related protein 11 (Osbpl11) from Mus musculus (Mouse).